The following is a 155-amino-acid chain: UPF0178 protein RHE_CH02229 (155 aa).

It belongs to the UPF0178 family.

This chain is UPF0178 protein RHE_CH02229, found in Rhizobium etli (strain ATCC 51251 / DSM 11541 / JCM 21823 / NBRC 15573 / CFN 42).